A 96-amino-acid chain; its full sequence is Non-specific lipid-transfer protein 2 (96 aa).

The N-terminal stretch at 1–27 is a signal peptide; it reads MMRRLAVLVLAVAMVAACGGGVVGVAG. Disulfide bonds link cysteine 30-cysteine 62, cysteine 38-cysteine 52, cysteine 53-cysteine 88, and cysteine 64-cysteine 95.

This sequence belongs to the plant LTP family. B11E subfamily.

Its function is as follows. Transfer lipids across membranes. May play a role in plant defense or in the biosynthesis of cuticle layers. The sequence is that of Non-specific lipid-transfer protein 2 (LTP-2) from Oryza sativa subsp. indica (Rice).